Reading from the N-terminus, the 175-residue chain is Small ribosomal subunit protein uS9 (175 aa).

Belongs to the universal ribosomal protein uS9 family.

This is Small ribosomal subunit protein uS9 from Streptomyces griseus subsp. griseus (strain JCM 4626 / CBS 651.72 / NBRC 13350 / KCC S-0626 / ISP 5235).